The chain runs to 412 residues: Docking protein 2 (412 aa).

Residues 4 to 114 (GAVKQGFLYL…WVQAICLLAF (111 aa)) enclose the PH domain. An IRS-type PTB domain is found at 147-252 (PHKEFAVTMR…SAQKNAAPAT (106 aa)). Positions 246–296 (KNAAPATPQPQPATIPASLPRPDSPYSRPHDSLPPPSPTTPVPAPRPRGQE) are disordered. Phosphotyrosine is present on Tyr271. The segment covering 277 to 291 (SLPPPSPTTPVPAPR) has biased composition (pro residues). Phosphotyrosine occurs at positions 299 and 345. Residues 359-412 (SPQEPRGEAWRRQATADRDPAGLQHVQPAGQDFSASGWQPGTEYDNVVLKKGPK) are disordered. Residues 361–378 (QEPRGEAWRRQATADRDP) show a composition bias toward basic and acidic residues.

It belongs to the DOK family. Type A subfamily. As to quaternary structure, interacts with phosphorylated RASGAP and EGFR. Interacts with RET and NCK. Interacts (via PH domain) with TEK/TIE2 (tyrosine phosphorylated). (Microbial infection) Interacts with Herpes simplex virus 1 (HHV-1) protein UL46; this interaction induces DOK2 phosphorylation and subsequent degradation. In terms of processing, on immunoreceptor stimulation, phosphorylated on C-terminal tyrosine residues. Phosphorylation on Tyr-345 is required for binding to the SH2 domain of NCK. Phosphorylation on both Tyr-271 and Tyr-299 is required for interaction with RASGAP. Phosphorylated on tyrosine residues by TEK/TIE2. Highly expressed in peripheral blood leukocytes, lymph nodes and spleen. Lower expression in thymus, bone marrow and fetal liver.

Functionally, DOK proteins are enzymatically inert adaptor or scaffolding proteins. They provide a docking platform for the assembly of multimolecular signaling complexes. DOK2 may modulate the cellular proliferation induced by IL-4, as well as IL-2 and IL-3. May be involved in modulating Bcr-Abl signaling. Attenuates EGF-stimulated MAP kinase activation. This Homo sapiens (Human) protein is Docking protein 2 (DOK2).